The primary structure comprises 459 residues: Protein king tubby (459 aa).

A disordered region spans residues 114 to 205; the sequence is HELEDEESSP…SNGAGGESEG (92 aa). The segment covering 123–155 has biased composition (polar residues); the sequence is PVTVIEQQQTAPHSANSTHSQRPSTTRQPSFND. At Ser152 the chain carries Phosphoserine.

It belongs to the TUB family.

It is found in the cytoplasm. The protein resides in the nucleus. The protein localises to the cell projection. Its subcellular location is the cilium membrane. It localises to the rhabdomere. In Drosophila persimilis (Fruit fly), this protein is Protein king tubby.